The chain runs to 329 residues: NADH-quinone oxidoreductase subunit H 1 (329 aa).

8 helical membrane passes run 12–32, 78–98, 120–140, 159–179, 191–211, 242–262, 270–290, and 308–328; these read LAKI…LVFA, WLFY…FAVI, VGLL…ALGG, LISY…LAGS, GIWF…SIAA, LFFV…TTFF, WLPP…FFIW, and WKVL…ILML.

Belongs to the complex I subunit 1 family. In terms of assembly, NDH-1 is composed of 14 different subunits. Subunits NuoA, H, J, K, L, M, N constitute the membrane sector of the complex.

The protein resides in the cell inner membrane. The enzyme catalyses a quinone + NADH + 5 H(+)(in) = a quinol + NAD(+) + 4 H(+)(out). Its function is as follows. NDH-1 shuttles electrons from NADH, via FMN and iron-sulfur (Fe-S) centers, to quinones in the respiratory chain. The immediate electron acceptor for the enzyme in this species is believed to be ubiquinone. Couples the redox reaction to proton translocation (for every two electrons transferred, four hydrogen ions are translocated across the cytoplasmic membrane), and thus conserves the redox energy in a proton gradient. This subunit may bind ubiquinone. The protein is NADH-quinone oxidoreductase subunit H 1 of Geobacter metallireducens (strain ATCC 53774 / DSM 7210 / GS-15).